The chain runs to 355 residues: Sesquiterpene synthase-like protein Agr11 (355 aa).

Belongs to the terpene synthase family.

This Cyclocybe aegerita (Black poplar mushroom) protein is Sesquiterpene synthase-like protein Agr11.